Consider the following 163-residue polypeptide: MRCLVALILTVLIVTPEVEAKTLPDKFLGTFKLERDENFDEYLKARGYGWIMRQVIKLAGVTKKFRNAASGKPDRYDMENLTTKKDTHHKDWALGEEFQDEALDSTQHKITFDLKDPNTLTETHIKVDDPTDVETYEYRRDGDYLVMKMSWKGVSTSRYYKKQ.

Positions 1–23 (MRCLVALILTVLIVTPEVEAKTL) are cleaved as a signal peptide.

Belongs to the calycin superfamily. Fatty-acid binding protein (FABP) family. As to expression, abundant in the fluid surrounding the developing embryo of Ascaris suum.

Its function is as follows. May play a role in sequestering potentially toxic fatty acids and their peroxidation products, or it may be involved in the maintenance of the impermeable lipid layer of the eggshell. This chain is Fatty acid-binding protein homolog, found in Ascaris suum (Pig roundworm).